The primary structure comprises 394 residues: 1-deoxy-D-xylulose 5-phosphate reductoisomerase (394 aa).

6 residues coordinate NADPH: T6, G7, S8, I9, A32, and N124. Residue K125 participates in 1-deoxy-D-xylulose 5-phosphate binding. Residue E126 participates in NADPH binding. D148 contacts Mn(2+). 1-deoxy-D-xylulose 5-phosphate contacts are provided by S149, E150, S174, and H197. E150 provides a ligand contact to Mn(2+). G203 is a binding site for NADPH. Positions 210, 215, 216, and 219 each coordinate 1-deoxy-D-xylulose 5-phosphate. Position 219 (E219) interacts with Mn(2+).

This sequence belongs to the DXR family. The cofactor is Mg(2+). It depends on Mn(2+) as a cofactor.

The enzyme catalyses 2-C-methyl-D-erythritol 4-phosphate + NADP(+) = 1-deoxy-D-xylulose 5-phosphate + NADPH + H(+). The protein operates within isoprenoid biosynthesis; isopentenyl diphosphate biosynthesis via DXP pathway; isopentenyl diphosphate from 1-deoxy-D-xylulose 5-phosphate: step 1/6. In terms of biological role, catalyzes the NADPH-dependent rearrangement and reduction of 1-deoxy-D-xylulose-5-phosphate (DXP) to 2-C-methyl-D-erythritol 4-phosphate (MEP). The chain is 1-deoxy-D-xylulose 5-phosphate reductoisomerase from Streptomyces avermitilis (strain ATCC 31267 / DSM 46492 / JCM 5070 / NBRC 14893 / NCIMB 12804 / NRRL 8165 / MA-4680).